A 1720-amino-acid chain; its full sequence is 182 kDa tankyrase-1-binding protein (1720 aa).

Residues 1-137 (MKGSTLREGT…PPLTPPARCA (137 aa)) form a disordered region. Ser-14 is subject to Phosphoserine. Over residues 117 to 127 (SGKEDAGKEDL) the composition is skewed to basic and acidic residues. At Thr-131 the chain carries Phosphothreonine. Phosphoserine is present on residues Ser-178 and Ser-220. Disordered stretches follow at residues 185 to 472 (SRLT…ESNW) and 485 to 595 (RPSG…EDQE). The interval 209 to 1563 (EEDSKSPAKG…TEILDSAMYR (1355 aa)) is acidic. Over residues 232–243 (QEEHSKTPEERN) the composition is skewed to basic and acidic residues. Thr-238 carries the phosphothreonine modification. Residues 266 to 287 (VSKTWVTSSADPVSEHGGSTSA) show a composition bias toward polar residues. Phosphoserine occurs at positions 286 and 300. The segment covering 296 to 316 (PASESPRLSSRPSSPCHSQLS) has biased composition (low complexity). Residues 317 to 327 (ETQSPAASEAS) are compositionally biased toward polar residues. Phosphoserine is present on residues Ser-429 and Ser-437. A compositionally biased stretch (polar residues) spans 449-459 (TLPQGQGSQSA). 2 positions are modified to phosphoserine: Ser-496 and Ser-500. Residues 502–518 (ITEASEAAEAAEADSWA) show a composition bias toward low complexity. Thr-503 and Thr-533 each carry phosphothreonine. Ser-539, Ser-568, Ser-602, Ser-673, Ser-692, and Ser-713 each carry phosphoserine. Disordered regions lie at residues 659-720 (TTLP…CSEG), 734-924 (GVAT…EFEK), and 955-1081 (SGGG…GWAG). A compositionally biased stretch (low complexity) spans 742–758 (SSFGSSSWSQDTSQNYS). Residues Ser-763, Ser-796, Ser-807, Ser-845, Ser-866, Ser-871, Ser-876, Ser-887, Ser-912, Ser-976, Ser-980, Ser-1006, Ser-1017, and Ser-1022 each carry the phosphoserine modification. Basic and acidic residues predominate over residues 840-866 (FGKRESQDPHSIHDKELQDQEFGKRDS). Residues 991–1014 (FEKKTPVGEDRFCEASRDVGHLEE) show a composition bias toward basic and acidic residues. Positions 1027 to 1039 (HSRDGAARPKDEG) are enriched in basic and acidic residues. Residues Ser-1047, Ser-1063, Ser-1084, Ser-1096, Ser-1126, Ser-1131, Ser-1171, Ser-1212, Ser-1241, and Ser-1246 each carry the phosphoserine modification. The segment at 1128–1153 (AGLSPSRKSGGGHFVPPGETKAGAVD) is disordered. A disordered region spans residues 1198 to 1255 (LARRLGTGESEEPRSLGVGEKDWTSSVEARNRDLPGQAEVGRHSQARESGVGEPDWSG). The span at 1208–1230 (EEPRSLGVGEKDWTSSVEARNRD) shows a compositional bias: basic and acidic residues. At Thr-1275 the chain carries Phosphothreonine. Ser-1290, Ser-1321, Ser-1324, Ser-1373, and Ser-1375 each carry phosphoserine. The disordered stretch occupies residues 1358-1546 (GRVGPDLELD…RGLLPSCPSE (189 aa)). Positions 1402–1411 (EDSSSPSFET) are enriched in polar residues. Phosphoserine occurs at positions 1425, 1429, 1437, 1440, 1442, 1463, and 1466. The span at 1428–1457 (ASPSSCLTRSPPSGSQSLLEGIMTASSSKG) shows a compositional bias: polar residues. The segment at 1440-1532 (SGSQSLLEGI…QNEQASAPPP (93 aa)) is tankyrase-binding. The segment covering 1477–1489 (LAAGAGQGEPQEP) has biased composition (low complexity). At Ser-1496 the chain carries Phosphoserine. Over residues 1515 to 1527 (WSLTGAARQNEQA) the composition is skewed to polar residues. At Ser-1549 the chain carries Phosphoserine. Thr-1554 is subject to Phosphothreonine. The segment at 1567 to 1720 (NLGRKRGHRA…QALKLKKKKI (154 aa)) is disordered. Positions 1568 to 1577 (LGRKRGHRAP) are enriched in basic residues. Basic and acidic residues predominate over residues 1593–1606 (SDTRLFQDSTEPRA). Phosphoserine occurs at positions 1611, 1612, and 1622. The short motif at 1620-1626 (PQSRRTR) is the Nuclear localization signal element. Position 1635 is an N6-methyllysine (Lys-1635). Ser-1643 and Ser-1657 each carry phosphoserine. Residues 1656-1670 (RSAEEGEVTESKSSQ) show a composition bias toward basic and acidic residues. The span at 1671–1690 (KESSVQRSKSCKVPGLGKPL) shows a compositional bias: low complexity. Residue Ser-1706 is modified to Phosphoserine. The short motif at 1714–1719 (KLKKKK) is the Nuclear localization signal element.

Binds to the ANK repeat domain of TNKS1 and TNKS2. Post-translationally, ADP-ribosylated by TNKS1.

Its subcellular location is the nucleus. It localises to the cytoplasm. It is found in the cytoskeleton. The protein resides in the chromosome. The protein is 182 kDa tankyrase-1-binding protein (Tnks1bp1) of Mus musculus (Mouse).